Reading from the N-terminus, the 276-residue chain is Formamidopyrimidine-DNA glycosylase (276 aa).

Pro2 (schiff-base intermediate with DNA) is an active-site residue. Glu3 serves as the catalytic Proton donor. The active-site Proton donor; for beta-elimination activity is Lys58. DNA is bound by residues His94, Arg112, and Arg157. The segment at 242–276 (FVYDRAGEPCRVCGAPIRQIVQGQRSTYYCPNCQR) adopts an FPG-type zinc-finger fold. The Proton donor; for delta-elimination activity role is filled by Arg266.

Belongs to the FPG family. Monomer. Requires Zn(2+) as cofactor.

It catalyses the reaction Hydrolysis of DNA containing ring-opened 7-methylguanine residues, releasing 2,6-diamino-4-hydroxy-5-(N-methyl)formamidopyrimidine.. The catalysed reaction is 2'-deoxyribonucleotide-(2'-deoxyribose 5'-phosphate)-2'-deoxyribonucleotide-DNA = a 3'-end 2'-deoxyribonucleotide-(2,3-dehydro-2,3-deoxyribose 5'-phosphate)-DNA + a 5'-end 5'-phospho-2'-deoxyribonucleoside-DNA + H(+). Its function is as follows. Involved in base excision repair of DNA damaged by oxidation or by mutagenic agents. Acts as a DNA glycosylase that recognizes and removes damaged bases. Has a preference for oxidized purines, such as 7,8-dihydro-8-oxoguanine (8-oxoG). Has AP (apurinic/apyrimidinic) lyase activity and introduces nicks in the DNA strand. Cleaves the DNA backbone by beta-delta elimination to generate a single-strand break at the site of the removed base with both 3'- and 5'-phosphates. This is Formamidopyrimidine-DNA glycosylase from Burkholderia thailandensis (strain ATCC 700388 / DSM 13276 / CCUG 48851 / CIP 106301 / E264).